Consider the following 215-residue polypeptide: Oligoribonuclease (215 aa).

Positions 5-170 constitute an Exonuclease domain; that stretch reads LVWIDCEMTG…ADIHESIREL (166 aa). Residue tyrosine 127 is part of the active site.

It belongs to the oligoribonuclease family.

It is found in the cytoplasm. Its function is as follows. 3'-to-5' exoribonuclease specific for small oligoribonucleotides. This chain is Oligoribonuclease, found in Mycobacterium leprae (strain TN).